The primary structure comprises 326 residues: Melanocortin receptor 4 (326 aa).

Over residues 1 to 14 the composition is skewed to basic residues; it reads MNTSHHHGLHHSFR. Residues 1-31 form a disordered region; the sequence is MNTSHHHGLHHSFRNHSQGALPVGKPSHGDR. The Extracellular segment spans residues 1–46; that stretch reads MNTSHHHGLHHSFRNHSQGALPVGKPSHGDRGSASGCYEQLLISTE. 2 N-linked (GlcNAc...) asparagine glycosylation sites follow: Asn-2 and Asn-15. A helical membrane pass occupies residues 47–67; the sequence is IFLTLGLVSLLENILVIAAIV. Residues 68–71 lie on the Cytoplasmic side of the membrane; the sequence is KNKN. A helical transmembrane segment spans residues 72–92; sequence LHSPMYFFICSLAVADLLVSV. Residues 93-121 are Extracellular-facing; sequence SNASETVVMALITGGNLTNRESIIKNMDN. Asn-94 and Asn-108 each carry an N-linked (GlcNAc...) asparagine glycan. Residues 122 to 142 form a helical membrane-spanning segment; sequence VFDSMICSSLLASIWSLLAIA. The Cytoplasmic portion of the chain corresponds to 143 to 163; sequence VDRYITIFYALRYHNIMTQRR. Residues 164-184 form a helical membrane-spanning segment; the sequence is AGTIITCIWTFCTVSGVLFIV. Residues 185-190 are Extracellular-facing; that stretch reads YSESTT. A helical membrane pass occupies residues 191 to 211; that stretch reads VLICLISMFFTMLALMASLYV. The Cytoplasmic portion of the chain corresponds to 212 to 246; that stretch reads HMFLLARLHMKRIAALPGNGPIWQAANMKGAITIT. A helical membrane pass occupies residues 247 to 267; that stretch reads ILLGVFVVCWAPFFLHLILMI. Topologically, residues 268 to 281 are extracellular; the sequence is SCPRNPYCVCFMSH. A helical membrane pass occupies residues 282–302; it reads FNMYLILIMCNSVIDPLIYAF. The Cytoplasmic segment spans residues 303 to 326; sequence RSQEMRKTFKEICCCWYGLASLCV. Residue Cys-316 is the site of S-palmitoyl cysteine attachment.

Belongs to the G-protein coupled receptor 1 family. Homodimer; disulfide-linked, also forms higher order oligomers. Interacts with mrap2a; decreasing ligand-sensitivity. Interacts with mrap2b; increasing ligand-sensitivity and generation of cAMP.

Its subcellular location is the cell membrane. Receptor specific to the heptapeptide core common to adrenocorticotropic hormone and alpha-, beta-, and gamma-MSH. Plays a central role in energy homeostasis and somatic growth. This receptor is mediated by G proteins that stimulate adenylate cyclase (cAMP). The chain is Melanocortin receptor 4 (mc4r) from Danio rerio (Zebrafish).